The primary structure comprises 368 residues: Aminomethyltransferase (368 aa).

Belongs to the GcvT family. The glycine cleavage system is composed of four proteins: P, T, L and H.

The catalysed reaction is N(6)-[(R)-S(8)-aminomethyldihydrolipoyl]-L-lysyl-[protein] + (6S)-5,6,7,8-tetrahydrofolate = N(6)-[(R)-dihydrolipoyl]-L-lysyl-[protein] + (6R)-5,10-methylene-5,6,7,8-tetrahydrofolate + NH4(+). The glycine cleavage system catalyzes the degradation of glycine. This chain is Aminomethyltransferase, found in Thermoanaerobacter pseudethanolicus (strain ATCC 33223 / 39E) (Clostridium thermohydrosulfuricum).